The following is a 435-amino-acid chain: uncharacterized protein (435 aa).

The region spanning 7–58 (PFPITKLPLVPRCKILKFFDYGDLLDISLCSKRMAQTVRDIHITADLHYLTL) is the F-box domain.

This is an uncharacterized protein from Caenorhabditis elegans.